The chain runs to 243 residues: CAVP-target protein (243 aa).

The interval 1–22 (PKPPAEAKPAAKPAAPPAAANP) is disordered. Positions 7–20 (AKPAAKPAAPPAAA) are enriched in low complexity. An IQ domain is found at 35 to 62 (SAATRIQASFRMHKNRMALKEKSIPKFS). 2 Ig-like C2-type domains span residues 59-150 (PKFS…LALE) and 151-243 (VPAK…VKVN).

Its function is as follows. This protein is the target of CAVP, which binds to it in a calcium-dependent manner. The chain is CAVP-target protein from Branchiostoma lanceolatum (Common lancelet).